Consider the following 382-residue polypeptide: Sphingoid long-chain base transporter RSB1 (382 aa).

At 1 to 34 (MSNATNNTLGSLLPQLEAAANSNSLYGGMVPNLR) the chain is on the extracellular side. N-linked (GlcNAc...) asparagine glycosylation is found at asparagine 3 and asparagine 6. The helical transmembrane segment at 35–55 (FNITMIVIWGILLTIHVVQLL) threads the bilayer. The Cytoplasmic portion of the chain corresponds to 56-57 (MR). The chain crosses the membrane as a helical span at residues 58 to 78 (QYWFSIAFICTGILEVLGFIG). The Extracellular segment spans residues 79–90 (RTWSHSNVADMD). Residues 91-111 (AFLLNMICLTIAPVFTMGGIY) traverse the membrane as a helical segment. Residues 112–135 (YQLAKLIEVYGHRFSLLPSPMAYS) are Cytoplasmic-facing. A helical transmembrane segment spans residues 136 to 156 (FIFICSDIVSLVVQAVGGGLC). The Extracellular portion of the chain corresponds to 157–171 (GVAVTDGTSTTTGNH). Residues 172–192 (VFIAGLAIQVASMAIFLMLWF) traverse the membrane as a helical segment. At 193–241 (HFLFRIYISVRWEHINSRPISLSLLKISQTEVDYLYREKFHFLRLEPKR) the chain is on the cytoplasmic side. The chain crosses the membrane as a helical span at residues 242–262 (WVFHYFNLAMTVAVLTIFTRC). Over 263-281 (CYRLAELVVGWDGYLITHE) the chain is Extracellular. The chain crosses the membrane as a helical span at residues 282–302 (WYFIILDALMMAIATVTLTIF). At 303 to 382 (HPGFAFKGRS…LFSSKKKAKL (80 aa)) the chain is on the cytoplasmic side.

Belongs to the lipid-translocating exporter (LTE) (TC 9.A.26.1) family.

It localises to the cell membrane. In terms of biological role, catalyzes the ATP-dependent translocation of sphingoid long-chain bases (LCBs) from the cytoplasmic site toward the extracytoplasmic side of the membrane (flip-flop). Involved in the establishment of the functional lipid asymmetry of the plasma membrane. Regulates intracellular levels of LCBs, sphingolipid precursors that are growth inhibitory at increased levels. This is Sphingoid long-chain base transporter RSB1 (RSB1) from Saccharomyces cerevisiae (strain RM11-1a) (Baker's yeast).